A 173-amino-acid polypeptide reads, in one-letter code: Adenine phosphoribosyltransferase (173 aa).

Belongs to the purine/pyrimidine phosphoribosyltransferase family. As to quaternary structure, homodimer.

It localises to the cytoplasm. The catalysed reaction is AMP + diphosphate = 5-phospho-alpha-D-ribose 1-diphosphate + adenine. The protein operates within purine metabolism; AMP biosynthesis via salvage pathway; AMP from adenine: step 1/1. Its function is as follows. Catalyzes a salvage reaction resulting in the formation of AMP, that is energically less costly than de novo synthesis. The protein is Adenine phosphoribosyltransferase of Solibacter usitatus (strain Ellin6076).